The chain runs to 740 residues: Melanoma-associated antigen D4 (740 aa).

The span at 1–11 (MAEGSYRKESE) shows a compositional bias: basic and acidic residues. Disordered stretches follow at residues 1 to 27 (MAEG…EVGE), 139 to 208 (ATHQ…GPST), 242 to 298 (PAGV…ALAK), and 321 to 377 (IPEP…ASQP). Positions 14–27 (NVEDMDEGSDEVGE) are enriched in acidic residues. Polar residues-rich tracts occupy residues 141 to 155 (HQAS…TSAA) and 162 to 175 (PETS…SRML). Positions 185–207 (APARSPQPQTSSQAQEAAAEGPS) are enriched in low complexity. Residues 321-337 (IPEPESAAATSQQSAEP) are compositionally biased toward low complexity. Residues 354-363 (DEYESGEEER) are compositionally biased toward acidic residues. One can recognise an MAGE domain in the interval 414-612 (LQERANKLVK…REWRAHFLEA (199 aa)). The segment at 697 to 722 (WRAGVSSGTNGAASASMLDGPSTSST) is disordered.

As to quaternary structure, interacts with TRIM27.

In terms of biological role, may enhance ubiquitin ligase activity of RING-type zinc finger-containing E3 ubiquitin-protein ligases. Proposed to act through recruitment and/or stabilization of the Ubl-conjugating enzyme (E2) at the E3:substrate complex. The chain is Melanoma-associated antigen D4 (MAGED4) from Bos taurus (Bovine).